Here is a 364-residue protein sequence, read N- to C-terminus: Aminomethyltransferase (364 aa).

The protein belongs to the GcvT family. As to quaternary structure, the glycine cleavage system is composed of four proteins: P, T, L and H.

The catalysed reaction is N(6)-[(R)-S(8)-aminomethyldihydrolipoyl]-L-lysyl-[protein] + (6S)-5,6,7,8-tetrahydrofolate = N(6)-[(R)-dihydrolipoyl]-L-lysyl-[protein] + (6R)-5,10-methylene-5,6,7,8-tetrahydrofolate + NH4(+). Its function is as follows. The glycine cleavage system catalyzes the degradation of glycine. This Bacillus licheniformis (strain ATCC 14580 / DSM 13 / JCM 2505 / CCUG 7422 / NBRC 12200 / NCIMB 9375 / NCTC 10341 / NRRL NRS-1264 / Gibson 46) protein is Aminomethyltransferase.